We begin with the raw amino-acid sequence, 312 residues long: Serine/threonine-protein phosphatase PP2A catalytic subunit (312 aa).

Mn(2+) contacts are provided by Asp-60, His-62, Asp-88, and Asn-120. Catalysis depends on His-121, which acts as the Proton donor. Residues His-170 and His-244 each coordinate Mn(2+).

This sequence belongs to the PPP phosphatase family. PP-2A subfamily. The cofactor is Mn(2+).

The protein resides in the cytoplasm. It catalyses the reaction O-phospho-L-seryl-[protein] + H2O = L-seryl-[protein] + phosphate. It carries out the reaction O-phospho-L-threonyl-[protein] + H2O = L-threonyl-[protein] + phosphate. This Nicotiana tabacum (Common tobacco) protein is Serine/threonine-protein phosphatase PP2A catalytic subunit.